The sequence spans 189 residues: Interleukin-23 subunit alpha (189 aa).

Residues 1–19 (MLGSRAVMLLLLLPWTAQG) form the signal peptide. A disulfide bridge connects residues Cys-77 and Cys-89.

The protein belongs to the IL-6 superfamily. In terms of assembly, heterodimer with IL12B; disulfide-linked. The heterodimer is known as interleukin IL-23. Interacts with IL23R; this interaction enables recruitment of IL12RB1. As to expression, secreted by activated dendritic and phagocytic cells and keratinocytes. Also expressed by dermal Langerhans cells (at protein level).

The protein localises to the secreted. In terms of biological role, associates with IL12B to form the pro-inflammatory cytokine IL-23 that plays different roles in innate and adaptive immunity. Released by antigen-presenting cells such as dendritic cells or macrophages, binds to a heterodimeric receptor complex composed of IL12RB1 and IL23R to activate JAK2 and TYK2 which then phosphorylate the receptor to form a docking site leading to the phosphorylation of STAT3 and STAT4. This process leads to activation of several pathways including p38 MAPK or NF-kappa-B and promotes the production of pro-inflammatory cytokines such as interleukin-17A/IL17A. In turn, participates in the early and effective intracellular bacterial clearance. Promotes the expansion and survival of T-helper 17 cells, a CD4-positive helper T-cell subset that produces IL-17, as well as other IL-17-producing cells. This chain is Interleukin-23 subunit alpha (IL23A), found in Homo sapiens (Human).